Consider the following 477-residue polypeptide: (R)-2-hydroxyglutaryl-CoA dehydratase, subunit alpha (477 aa).

It belongs to the FldB/FldC dehydratase alpha/beta subunit family. The (R)-2-hydroxyglutaryl-CoA dehydratase enzyme system is a heterodimer composed of an alpha subunit (HgdA) and a beta subunit (HgdB). [4Fe-4S] cluster serves as cofactor. It depends on FMN as a cofactor. Mg(2+) is required as a cofactor.

The protein localises to the cytoplasm. The enzyme catalyses (R)-2-hydroxyglutaryl-CoA = (2E)-glutaconyl-CoA + H2O. It participates in amino-acid degradation; L-glutamate degradation via hydroxyglutarate pathway; crotonoyl-CoA from L-glutamate: step 4/5. Its activity is regulated as follows. Activated by the HgdC. Reversibly inactivated by oxidants such as 2-nitrophenol, 3-nitrophenol, 4-nitrophenol, 4-nitrobenzoate, carbonyl cyanide 4-(trifluoromethoxy)phenylhydrazone (FCCP) and chloramphenicol. Irreversibly inactivated by oxidants such as hydroxylamine and nitrite. Involved in the fermentation of L-glutamate via the hydroxyglutarate pathway. Catalyzes the reversible syn-elimination of water from (R)-2-hydroxyglutaryl-CoA to yield (E)-glutaconyl-CoA. The dehydration mechanism involves a transient one electron reduction of the thioester from (R)-2-hydroxyglutaryl-CoA, generating a ketyl radical. Prior to (E)-glutaconyl-CoA formation, the ketyl radical is subsequently reoxidized by electron transfer back to the HgdA-HgdB complex (CompD) to avoid change in oxidation state of the substrate. The appropriate redox state of dehydratase HgdA-HgdB complex (CompD) is maintained by HgdC (CompA) via hydrolysis of ATP and ATP-dependent electron transfer. Since the electron is recycled, the dehydratase is able to perform several turnovers with only catalytic amounts of ATP and substoichiometric amounts of HgdC (CompA). The polypeptide is (R)-2-hydroxyglutaryl-CoA dehydratase, subunit alpha (Acidaminococcus fermentans (strain ATCC 25085 / DSM 20731 / CCUG 9996 / CIP 106432 / VR4)).